Reading from the N-terminus, the 260-residue chain is Ribonuclease 3 (260 aa).

The RNase III domain maps to 16 to 145 (VQLLESRLGL…VFGAVFLTSG (130 aa)). E58 provides a ligand contact to Mg(2+). Residue D62 is part of the active site. D131 and E134 together coordinate Mg(2+). Residue E134 is part of the active site. The DRBM domain occupies 172–241 (DYKTLLQEMA…AQATLEKLRE (70 aa)). Positions 219–260 (ATGRSKKEAEQSAAQATLEKLREDAACPTSPPPGTPRHDTPA) are disordered.

The protein belongs to the ribonuclease III family. Homodimer. Mg(2+) is required as a cofactor.

The protein resides in the cytoplasm. It carries out the reaction Endonucleolytic cleavage to 5'-phosphomonoester.. Digests double-stranded RNA. Involved in the processing of primary rRNA transcript to yield the immediate precursors to the large and small rRNAs (23S and 16S). Processes some mRNAs, and tRNAs when they are encoded in the rRNA operon. Processes pre-crRNA and tracrRNA of type II CRISPR loci if present in the organism. This Myxococcus xanthus (strain DK1622) protein is Ribonuclease 3.